Reading from the N-terminus, the 891-residue chain is Valine--tRNA ligase (891 aa).

Positions 43-53 (PFTSGTLHLGH) match the 'HIGH' region motif. A 'KMSKS' region motif is present at residues 536–540 (KMSKS). Lys539 contributes to the ATP binding site.

It belongs to the class-I aminoacyl-tRNA synthetase family. ValS type 2 subfamily.

The protein localises to the cytoplasm. It catalyses the reaction tRNA(Val) + L-valine + ATP = L-valyl-tRNA(Val) + AMP + diphosphate. Catalyzes the attachment of valine to tRNA(Val). As ValRS can inadvertently accommodate and process structurally similar amino acids such as threonine, to avoid such errors, it has a 'posttransfer' editing activity that hydrolyzes mischarged Thr-tRNA(Val) in a tRNA-dependent manner. The polypeptide is Valine--tRNA ligase (Pyrococcus horikoshii (strain ATCC 700860 / DSM 12428 / JCM 9974 / NBRC 100139 / OT-3)).